The primary structure comprises 309 residues: 2-phospho-L-lactate transferase (309 aa).

Residues D50 and K89 each coordinate 7,8-didemethyl-8-hydroxy-5-deazariboflavin.

Belongs to the CofD family. As to quaternary structure, homodimer. The cofactor is Mg(2+).

It carries out the reaction (2S)-lactyl-2-diphospho-5'-guanosine + 7,8-didemethyl-8-hydroxy-5-deazariboflavin = oxidized coenzyme F420-0 + GMP + H(+). The protein operates within cofactor biosynthesis; coenzyme F420 biosynthesis. Functionally, catalyzes the transfer of the 2-phospholactate moiety from (2S)-lactyl-2-diphospho-5'-guanosine to 7,8-didemethyl-8-hydroxy-5-deazariboflavin (FO) with the formation of oxidized coenzyme F420-0 and GMP. This is 2-phospho-L-lactate transferase from Methanococcus maripaludis (strain C5 / ATCC BAA-1333).